A 440-amino-acid chain; its full sequence is tRNA modification GTPase MnmE (440 aa).

Residues Arg23, Glu80, and Lys120 each contribute to the (6S)-5-formyl-5,6,7,8-tetrahydrofolate site. Positions 217-366 constitute a TrmE-type G domain; the sequence is GLKIVIAGEP…LLAMLQAHLP (150 aa). Asn227 contributes to the K(+) binding site. GTP contacts are provided by residues 227-232, 246-252, and 271-274; these read NAGKSS, TEIAGTT, and DTAG. Ser231 contacts Mg(2+). K(+)-binding residues include Thr246, Ile248, and Thr251. Thr252 contributes to the Mg(2+) binding site. (6S)-5-formyl-5,6,7,8-tetrahydrofolate is bound at residue Lys440.

Belongs to the TRAFAC class TrmE-Era-EngA-EngB-Septin-like GTPase superfamily. TrmE GTPase family. As to quaternary structure, homodimer. Heterotetramer of two MnmE and two MnmG subunits. Requires K(+) as cofactor.

It is found in the cytoplasm. In terms of biological role, exhibits a very high intrinsic GTPase hydrolysis rate. Involved in the addition of a carboxymethylaminomethyl (cmnm) group at the wobble position (U34) of certain tRNAs, forming tRNA-cmnm(5)s(2)U34. The polypeptide is tRNA modification GTPase MnmE (Sinorhizobium medicae (strain WSM419) (Ensifer medicae)).